The sequence spans 619 residues: TBC domain-containing protein C1952.17c (619 aa).

In terms of domain architecture, Rab-GAP TBC spans 34 to 387 (PDEYSLRAKA…RLWDSIIADQ (354 aa)).

Its subcellular location is the cytoplasm. In terms of biological role, may act as a GTPase-activating protein for Rab family protein(s). The chain is TBC domain-containing protein C1952.17c from Schizosaccharomyces pombe (strain 972 / ATCC 24843) (Fission yeast).